Here is a 469-residue protein sequence, read N- to C-terminus: Mannosyl-oligosaccharide 1,2-alpha-mannosidase IA (469 aa).

The Lumenal portion of the chain corresponds to 1–469 (REPADAAVRE…DQKEVEVKVK (469 aa)). A disulfide bridge connects residues cysteine 292 and cysteine 324. The N-linked (GlcNAc...) asparagine glycan is linked to asparagine 329. Glutamate 338 functions as the Proton donor in the catalytic mechanism. Residue threonine 449 participates in Ca(2+) binding.

Belongs to the glycosyl hydrolase 47 family. The cofactor is Ca(2+).

The protein localises to the golgi apparatus membrane. It carries out the reaction N(4)-(alpha-D-Man-(1-&gt;2)-alpha-D-Man-(1-&gt;2)-alpha-D-Man-(1-&gt;3)-[alpha-D-Man-(1-&gt;2)-alpha-D-Man-(1-&gt;3)-[alpha-D-Man-(1-&gt;2)-alpha-D-Man-(1-&gt;6)]-alpha-D-Man-(1-&gt;6)]-beta-D-Man-(1-&gt;4)-beta-D-GlcNAc-(1-&gt;4)-beta-D-GlcNAc)-L-asparaginyl-[protein] (N-glucan mannose isomer 9A1,2,3B1,2,3) + 4 H2O = N(4)-(alpha-D-Man-(1-&gt;3)-[alpha-D-Man-(1-&gt;3)-[alpha-D-Man-(1-&gt;6)]-alpha-D-Man-(1-&gt;6)]-beta-D-Man-(1-&gt;4)-beta-D-GlcNAc-(1-&gt;4)-beta-D-GlcNAc)-L-asparaginyl-[protein] (N-glucan mannose isomer 5A1,2) + 4 beta-D-mannose. The catalysed reaction is N(4)-(alpha-D-Man-(1-&gt;2)-alpha-D-Man-(1-&gt;2)-alpha-D-Man-(1-&gt;3)-[alpha-D-Man-(1-&gt;3)-[alpha-D-Man-(1-&gt;2)-alpha-D-Man-(1-&gt;6)]-alpha-D-Man-(1-&gt;6)]-beta-D-Man-(1-&gt;4)-beta-D-GlcNAc-(1-&gt;4)-beta-D-GlcNAc)-L-asparaginyl-[protein] (N-glucan mannose isomer 8A1,2,3B1,3) + 3 H2O = N(4)-(alpha-D-Man-(1-&gt;3)-[alpha-D-Man-(1-&gt;3)-[alpha-D-Man-(1-&gt;6)]-alpha-D-Man-(1-&gt;6)]-beta-D-Man-(1-&gt;4)-beta-D-GlcNAc-(1-&gt;4)-beta-D-GlcNAc)-L-asparaginyl-[protein] (N-glucan mannose isomer 5A1,2) + 3 beta-D-mannose. It participates in protein modification; protein glycosylation. Inhibited by both 1-deoxymannojirimycin and kifunensine. Functionally, involved in the maturation of Asn-linked oligosaccharides. Progressively trim alpha-1,2-linked mannose residues from Man(9)GlcNAc(2) to produce Man(5)GlcNAc(2). The protein is Mannosyl-oligosaccharide 1,2-alpha-mannosidase IA (MAN1A1) of Oryctolagus cuniculus (Rabbit).